The following is a 357-amino-acid chain: Embryonic growth/differentiation factor 1 (357 aa).

A signal peptide spans 1–23; sequence MLPVCHRFCDHLLLLLLLPSTTL. Residues 24 to 237 constitute a propeptide that is removed on maturation; that stretch reads APAPASMGPA…RLCPLPRLRR (214 aa). The N-linked (GlcNAc...) asparagine glycan is linked to Asn-191. Intrachain disulfides connect Cys-251/Cys-322, Cys-280/Cys-354, and Cys-284/Cys-356.

It belongs to the TGF-beta family. Homodimer; disulfide-linked. Expressed almost exclusively in the nervous system.

The protein resides in the secreted. Functionally, may mediate cell differentiation events during embryonic development. The chain is Embryonic growth/differentiation factor 1 (Gdf1) from Mus musculus (Mouse).